Here is a 423-residue protein sequence, read N- to C-terminus: Immunity-related GTPase family M protein 3 (423 aa).

Residues 83–260 enclose the IRG-type G domain; it reads YRVKIAVTGD…PELRNTLQKD (178 aa). GTP is bound by residues 92 to 99, 117 to 121, and 200 to 202; these read DSGNGMSS, TGVVR, and KLD.

This sequence belongs to the TRAFAC class dynamin-like GTPase superfamily. IRG family.

It is found in the endoplasmic reticulum. Its subcellular location is the cytoplasmic vesicle membrane. It localises to the lipid droplet. The catalysed reaction is GTP + H2O = GDP + phosphate + H(+). Its function is as follows. Immunity-related GTPase that plays important roles in host resistance to acute infection by protozoan, such as Toxoplasma gondii and Leishmania major. Acts as a dynamin-like protein that binds to intracellular membranes and promotes remodeling and trafficking of those membranes. Acts predominantly to restrict acute protozoan infection: expression is required in both hematopoietic and non-hematopoietic cellular compartments and is dependent on Stat1. Only plays a partial role in the control of latent Toxoplasma infection. Involved in the clearance of acute protozoan infections by regulating autophagy, possibly by promoting the fusion of phagosomes with lysosomes for efficient degradation of vacuoles containing parasites. Probably involved in membrane disruption of parasite-containing vacuoles. In addition to its role in resistance to acute infection by protozoan, also acts as a negative regulator of the integrated stress response (ISR) following coxsackievirus B3 infection. Promotes differentiation of activated CD8(+) T-cells. This is Immunity-related GTPase family M protein 3 from Mus musculus (Mouse).